Reading from the N-terminus, the 490-residue chain is Trigger factor (490 aa).

A PPIase FKBP-type domain is found at 161–247 (GDQVIVDIEA…VHEVKEAELP (87 aa)). Residues 441–460 (AEPAEGTEPAAEEAVTAPEV) are compositionally biased toward low complexity. The segment at 441–490 (AEPAEGTEPAAEEAVTAPEVVDGETTPASESAESLAVTETGSRADDDQAS) is disordered. Positions 466–481 (TPASESAESLAVTETG) are enriched in polar residues.

Belongs to the FKBP-type PPIase family. Tig subfamily.

The protein resides in the cytoplasm. It carries out the reaction [protein]-peptidylproline (omega=180) = [protein]-peptidylproline (omega=0). Its function is as follows. Involved in protein export. Acts as a chaperone by maintaining the newly synthesized protein in an open conformation. Functions as a peptidyl-prolyl cis-trans isomerase. This chain is Trigger factor, found in Thermomicrobium roseum (strain ATCC 27502 / DSM 5159 / P-2).